Here is a 373-residue protein sequence, read N- to C-terminus: NAD-dependent protein deacetylase SIR2rp1 (373 aa).

One can recognise a Deacetylase sirtuin-type domain in the interval 12–349 (HALGEPTVEG…LKLAECLGLR (338 aa)). NAD(+) contacts are provided by residues 39 to 59 (GAGASVAAGIPDFRSSDTGIY) and 124 to 127 (QNID). His144 serves as the catalytic Proton acceptor. Zn(2+)-binding residues include Cys152, Cys155, Cys176, and Cys179. NAD(+)-binding positions include 216-218 (GTS) and 241-243 (NRE). Residues 263–313 (DAVAKEGRSSSSQSRSPSASARREEGGTEDGSSSPNEEVEDASTSSSSDGY) form a disordered region. Residues 271-282 (SSSSQSRSPSAS) show a composition bias toward low complexity. NAD(+) is bound at residue Cys335.

It belongs to the sirtuin family. Class I subfamily. Zn(2+) serves as cofactor.

The protein resides in the nucleus. The enzyme catalyses N(6)-acetyl-L-lysyl-[protein] + NAD(+) + H2O = 2''-O-acetyl-ADP-D-ribose + nicotinamide + L-lysyl-[protein]. Its function is as follows. NAD-dependent deacetylase, which probably acts as a regulator of gene expression believed to help form modified chromatin structures on the genes it regulates. This is NAD-dependent protein deacetylase SIR2rp1 (SIR2rp1) from Leishmania major.